The primary structure comprises 414 residues: GA-binding protein subunit beta-2 (414 aa).

ANK repeat units follow at residues 5-34, 37-66, 70-99, 103-132, and 136-166; these read DLGK…PFTT, LGTS…SRDA, VDRT…DVNA, LQMT…DVYA, and FDKS…QVNT. Phosphoserine is present on S218. Residues 310–362 adopt a coiled-coil conformation; it reads EEMKEGSERELLQQQLQEANRRAQEYRHQLLKKEQEAEQYRLRLEAMAQQQTN.

In terms of assembly, heterotetramer of two alpha and two beta subunits. The C-terminal is necessary for the formation of a heterotetrameric GABP-alpha-2/beta-2 complex, and also facilitates homotypic dimerization. Interacts with ADGRB2. High levels in thymus, spleen, kidney and intestine.

It is found in the nucleus. In terms of biological role, transcription factor capable of interacting with purine rich repeats (GA repeats). Must associate with GABP-alpha to bind DNA. The chain is GA-binding protein subunit beta-2 (Gabpb2) from Mus musculus (Mouse).